Reading from the N-terminus, the 36-residue chain is Photosystem II reaction center protein Y (36 aa).

The Lumenal segment spans residues 1 to 4 (MDTR). Residues 5 to 23 (LLVIAAPVLVAASWALFNI) traverse the membrane as a helical segment. The Stromal portion of the chain corresponds to 24–36 (GRLAIQQIQRLSR).

It belongs to the PsbY family. PSII is composed of 1 copy each of membrane proteins PsbA, PsbB, PsbC, PsbD, PsbE, PsbF, PsbH, PsbI, PsbJ, PsbK, PsbL, PsbM, PsbT, PsbX, PsbY, PsbZ, Psb30/Ycf12, at least 3 peripheral proteins of the oxygen-evolving complex and a large number of cofactors. It forms dimeric complexes.

The protein localises to the plastid. It localises to the chloroplast thylakoid membrane. Its function is as follows. Loosely associated component of the core of photosystem II (PSII), it is not always seen in crystals. PSII is a light-driven water plastoquinone oxidoreductase, using light energy to abstract electrons from H(2)O, generating a proton gradient subsequently used for ATP formation. This Thalassiosira pseudonana (Marine diatom) protein is Photosystem II reaction center protein Y.